The sequence spans 360 residues: Mannan endo-1,4-beta-mannosidase (360 aa).

A signal peptide spans 1 to 24 (MLKKLAVCLSIVLLLLGAASPISA). The region spanning 36–347 (QTTKDIMNWL…YQNSWTLNKG (312 aa)) is the GH26 domain. His129 is a substrate binding site. Residue Glu191 is the Proton donor of the active site. Substrate contacts are provided by Trp196 and Tyr266. Glu290 acts as the Nucleophile in catalysis.

The protein belongs to the glycosyl hydrolase 26 family. In terms of assembly, homodimer.

It localises to the secreted. It carries out the reaction Random hydrolysis of (1-&gt;4)-beta-D-mannosidic linkages in mannans, galactomannans and glucomannans.. Its function is as follows. Involved in the degradation of glucomannan. Catalyzes the endo hydrolysis of beta-1,4-linked mannan, galactomannan and glucomannan. The chain is Mannan endo-1,4-beta-mannosidase from Bacillus subtilis.